Reading from the N-terminus, the 55-residue chain is Large ribosomal subunit protein bL33 (55 aa).

Belongs to the bacterial ribosomal protein bL33 family.

In Sinorhizobium medicae (strain WSM419) (Ensifer medicae), this protein is Large ribosomal subunit protein bL33.